A 340-amino-acid polypeptide reads, in one-letter code: Biotin synthase (340 aa).

The region spanning 45–272 is the Radical SAM core domain; the sequence is NAVQVSTLLS…ASYVRLSAGR (228 aa). Positions 60, 64, and 67 each coordinate [4Fe-4S] cluster. [2Fe-2S] cluster contacts are provided by Cys104, Cys135, Cys195, and Arg267.

Belongs to the radical SAM superfamily. Biotin synthase family. Homodimer. Requires [4Fe-4S] cluster as cofactor. It depends on [2Fe-2S] cluster as a cofactor.

The catalysed reaction is (4R,5S)-dethiobiotin + (sulfur carrier)-SH + 2 reduced [2Fe-2S]-[ferredoxin] + 2 S-adenosyl-L-methionine = (sulfur carrier)-H + biotin + 2 5'-deoxyadenosine + 2 L-methionine + 2 oxidized [2Fe-2S]-[ferredoxin]. It functions in the pathway cofactor biosynthesis; biotin biosynthesis; biotin from 7,8-diaminononanoate: step 2/2. Catalyzes the conversion of dethiobiotin (DTB) to biotin by the insertion of a sulfur atom into dethiobiotin via a radical-based mechanism. The chain is Biotin synthase from Thioalkalivibrio sulfidiphilus (strain HL-EbGR7).